We begin with the raw amino-acid sequence, 173 residues long: MQAPSLTVTAPASPSPDERKQEYRDAMARLGAAVNIVTTDGPGGLAGFAATAVCSVTDSPPTLLVCLNRTSSAYPAVNANRVLCVNTLERGHEDLSRLFGGKTPVHERFEGASWSSLETGAPVLDDALISLDCRVKAISDGGTHDILICDVVAIRENDGGQALIYFDRRYHAI.

The protein belongs to the non-flavoprotein flavin reductase family. RutF subfamily.

It catalyses the reaction FMNH2 + NAD(+) = FMN + NADH + 2 H(+). Catalyzes the reduction of FMN to FMNH2 which is used to reduce pyrimidine by RutA via the Rut pathway. The chain is FMN reductase (NADH) RutF 2 from Rhizobium rhizogenes (strain K84 / ATCC BAA-868) (Agrobacterium radiobacter).